Consider the following 219-residue polypeptide: Cytidylate kinase (219 aa).

Position 21–29 (21–29 (GPAASGKGT)) interacts with ATP.

Belongs to the cytidylate kinase family. Type 1 subfamily.

Its subcellular location is the cytoplasm. It catalyses the reaction CMP + ATP = CDP + ADP. It carries out the reaction dCMP + ATP = dCDP + ADP. This chain is Cytidylate kinase, found in Rickettsia akari (strain Hartford).